We begin with the raw amino-acid sequence, 188 residues long: dTTP/UTP pyrophosphatase (188 aa).

Asp70 acts as the Proton acceptor in catalysis.

This sequence belongs to the Maf family. YhdE subfamily. A divalent metal cation is required as a cofactor.

Its subcellular location is the cytoplasm. It carries out the reaction dTTP + H2O = dTMP + diphosphate + H(+). The enzyme catalyses UTP + H2O = UMP + diphosphate + H(+). Functionally, nucleoside triphosphate pyrophosphatase that hydrolyzes dTTP and UTP. May have a dual role in cell division arrest and in preventing the incorporation of modified nucleotides into cellular nucleic acids. In Clostridium botulinum (strain Eklund 17B / Type B), this protein is dTTP/UTP pyrophosphatase.